Consider the following 226-residue polypeptide: Thymidylate kinase (226 aa).

20 to 27 (GGEGAGKS) is an ATP binding site.

The protein belongs to the thymidylate kinase family.

The catalysed reaction is dTMP + ATP = dTDP + ADP. Phosphorylation of dTMP to form dTDP in both de novo and salvage pathways of dTTP synthesis. The polypeptide is Thymidylate kinase (Bradyrhizobium sp. (strain ORS 278)).